Consider the following 145-residue polypeptide: Bacilliredoxin BrxB (145 aa).

Residues Cys-52 and Cys-54 each act as nucleophile in the active site. S-bacillithiol cysteine disulfide is present on Cys-52. The CXC active site motif motif lies at 52-54 (CGC). A disulfide bridge connects residues Cys-52 and Cys-54.

The protein belongs to the bacilliredoxin family. Interacts with BrxC. Post-translationally, N-terminal Cys of the CXC active site motif can react with bacillithiol (BSH) to form mixed disulfides. S-bacillithiolation protects Cys residues against overoxidation by acting as a redox switch in response to oxidative stress.

S-bacillithiolation is the formation of mixed disulfide bonds between protein thiols and the general thiol reductant bacillithiol (BSH) under oxidative stress. BSH is an equivalent of glutathione (GSH) in Firmicutes. This protein is a dithiol bacilliredoxin, which debacillithiolates (removes BSH) the S-bacillithiolated OhrR (OhrR-SSB) in vitro and in vivo NaOCl-generated S-bacillithiolated MetE (MetE-SSB). Involved in maintaining redox homeostasis in response to disulfide stress conditions. The sequence is that of Bacilliredoxin BrxB from Bacillus subtilis (strain 168).